An 874-amino-acid polypeptide reads, in one-letter code: MSIQSIVTKETLKKKDTNIEIQEKNMNDLVVSASRVIAPLWPISTFAAHHPWMGLEKQSFEQVANWLKEARNVDIYPSASMIHSAKAKGEIEESFLQIALSRWLDSQSFHMPRETAERFCQEALKLERLPSSLLSSPELNKLAEEISYVNTGSMKDSSMQPISSLIENQKGDNLSDILNYHIIKWCKLYLDDTGASWTMPNREKGFYRAWQHLITFDPALSKNERKVLKDWPEDPLIALTKALSELGISESNMQAYLEGHLLSLPGWAGMIRWRSQQSIEEQELLVEYLAVRLSMELAIVKPYLPLKNQKAEKKVSIVPLIASWIYWGDISVEKWSQMSATEQSELLAFAYRFDENTRKKLWLKAWEQTHAEQLREKIASKQRATNDKKRVVAQLAFCIDVRSEPFRRHLEKLGPFETFGIAGFFGLPIATTELGSNNSHPSLPVILKPKHQIKELTDENEYNSYEQRKKIDSSVSYTFKTMKQNVLTSMLLPEVSGPLLGLQMVTRSFVPRSVGGFIRNLRKTMLQKPNTTFSLNHVHDTNCEIPIGFTKEEKVNYVRQALKMVGLTEGFAPLVVMCGHSSQSTNNPYAAALECGACGGAAGGFNARVFATLCNLPEVREALSAEGINIPEDTIFAAAEHKTTVDELEWIYVPKLSETAQEAFDCIDSIMPNVSQHANRERLMQLPNFKTKIKNPSKEAHRFAEDWSEIRPEWGLARNASFIIGQRELTRDCDLEGRAFLHNYDWKQDESGDILASIIAGPGTVAQWINLQYYASTVAPHYYGSGNKTTQTVTAGLGVMQGNASDLLSGLPWQSVMQSDSETYHSPLRLLIVIQAPTKYIERLLNNDFTFREKVQNGWVRLASVDPEGRWKNW.

Zn(2+) contacts are provided by Cys398, Asp400, His580, and Cys595.

It belongs to the inorganic carbon transporter (TC 9.A.2) DabA family. Forms a complex with DabB. Requires Zn(2+) as cofactor.

It localises to the cell membrane. In terms of biological role, part of an energy-coupled inorganic carbon pump. The polypeptide is Probable inorganic carbon transporter subunit DabA (Bacillus cereus (strain ZK / E33L)).